Reading from the N-terminus, the 468-residue chain is Glutamate--tRNA ligase (468 aa).

A 'HIGH' region motif is present at residues 10 to 20 (PSPTGDLHIGG). 4 residues coordinate Zn(2+): Cys99, Cys101, Cys126, and Asp128. The short motif at 236–240 (RLSKR) is the 'KMSKS' region element. An ATP-binding site is contributed by Lys239.

It belongs to the class-I aminoacyl-tRNA synthetase family. Glutamate--tRNA ligase type 1 subfamily. Monomer. Zn(2+) is required as a cofactor.

It is found in the cytoplasm. The catalysed reaction is tRNA(Glu) + L-glutamate + ATP = L-glutamyl-tRNA(Glu) + AMP + diphosphate. In terms of biological role, catalyzes the attachment of glutamate to tRNA(Glu) in a two-step reaction: glutamate is first activated by ATP to form Glu-AMP and then transferred to the acceptor end of tRNA(Glu). This is Glutamate--tRNA ligase from Syntrophobacter fumaroxidans (strain DSM 10017 / MPOB).